A 227-amino-acid polypeptide reads, in one-letter code: Cytochrome c oxidase subunit 2 (227 aa).

The Mitochondrial intermembrane portion of the chain corresponds to 1–14 (MAYPFQLGLQDATS). A helical transmembrane segment spans residues 15–45 (PIMEELLHFHDHTLMIVFLISSLVLYIITLM). At 46 to 59 (LTTKLTHTSTMDAQ) the chain is on the mitochondrial matrix side. The helical transmembrane segment at 60 to 87 (EVETVWTILPAIILILIALPSLRILYMM) threads the bilayer. Over 88–227 (DEINNPSLTV…YFETWSALMV (140 aa)) the chain is Mitochondrial intermembrane. Residues H161, C196, E198, C200, H204, and M207 each contribute to the Cu cation site. E198 contacts Mg(2+). Y218 is modified (phosphotyrosine).

The protein belongs to the cytochrome c oxidase subunit 2 family. In terms of assembly, component of the cytochrome c oxidase (complex IV, CIV), a multisubunit enzyme composed of 14 subunits. The complex is composed of a catalytic core of 3 subunits MT-CO1, MT-CO2 and MT-CO3, encoded in the mitochondrial DNA, and 11 supernumerary subunits COX4I, COX5A, COX5B, COX6A, COX6B, COX6C, COX7A, COX7B, COX7C, COX8 and NDUFA4, which are encoded in the nuclear genome. The complex exists as a monomer or a dimer and forms supercomplexes (SCs) in the inner mitochondrial membrane with NADH-ubiquinone oxidoreductase (complex I, CI) and ubiquinol-cytochrome c oxidoreductase (cytochrome b-c1 complex, complex III, CIII), resulting in different assemblies (supercomplex SCI(1)III(2)IV(1) and megacomplex MCI(2)III(2)IV(2)). Found in a complex with TMEM177, COA6, COX18, COX20, SCO1 and SCO2. Interacts with TMEM177 in a COX20-dependent manner. Interacts with COX20. Interacts with COX16. The cofactor is Cu cation.

The protein resides in the mitochondrion inner membrane. The enzyme catalyses 4 Fe(II)-[cytochrome c] + O2 + 8 H(+)(in) = 4 Fe(III)-[cytochrome c] + 2 H2O + 4 H(+)(out). Functionally, component of the cytochrome c oxidase, the last enzyme in the mitochondrial electron transport chain which drives oxidative phosphorylation. The respiratory chain contains 3 multisubunit complexes succinate dehydrogenase (complex II, CII), ubiquinol-cytochrome c oxidoreductase (cytochrome b-c1 complex, complex III, CIII) and cytochrome c oxidase (complex IV, CIV), that cooperate to transfer electrons derived from NADH and succinate to molecular oxygen, creating an electrochemical gradient over the inner membrane that drives transmembrane transport and the ATP synthase. Cytochrome c oxidase is the component of the respiratory chain that catalyzes the reduction of oxygen to water. Electrons originating from reduced cytochrome c in the intermembrane space (IMS) are transferred via the dinuclear copper A center (CU(A)) of subunit 2 and heme A of subunit 1 to the active site in subunit 1, a binuclear center (BNC) formed by heme A3 and copper B (CU(B)). The BNC reduces molecular oxygen to 2 water molecules using 4 electrons from cytochrome c in the IMS and 4 protons from the mitochondrial matrix. The polypeptide is Cytochrome c oxidase subunit 2 (MT-CO2) (Vulpes macrotis (Kit fox)).